We begin with the raw amino-acid sequence, 441 residues long: Proline--tRNA ligase (441 aa).

The protein belongs to the class-II aminoacyl-tRNA synthetase family. ProS type 2 subfamily. Homodimer.

It localises to the cytoplasm. It catalyses the reaction tRNA(Pro) + L-proline + ATP = L-prolyl-tRNA(Pro) + AMP + diphosphate. Functionally, catalyzes the attachment of proline to tRNA(Pro) in a two-step reaction: proline is first activated by ATP to form Pro-AMP and then transferred to the acceptor end of tRNA(Pro). The sequence is that of Proline--tRNA ligase from Bartonella henselae (strain ATCC 49882 / DSM 28221 / CCUG 30454 / Houston 1) (Rochalimaea henselae).